A 451-amino-acid chain; its full sequence is Protein SAR DEFICIENT 1 (451 aa).

The interval 149–270 is DNA-binding; it reads DKWTSDEFES…AFHKKLSSRH (122 aa).

This sequence belongs to the plant ACBP60 protein family. In terms of assembly, (Microbial infection) Interacts with V.dahliae SCP41.

It localises to the nucleus. Functionally, transcription activator that binds DNA in a sequence-specific manner, 5'-GAAATTTTGG-3', to promote the expression of target genes. Recruited to the promoter of ICS1 and other defense-related genes (e.g. PR1 and SID2) in response to both biotic (e.g. Pseudomonas syringae pv. maculicola ES4326) and abiotic stresses (e.g. UV-B), thus triggering slow defense responses by stimulating salicylic acid (SA) biosynthesis. Required for basal and systemic acquired resistance to P.syringae pv. maculicola and Hyaloperonospora arabidopsidis. The protein is Protein SAR DEFICIENT 1 of Arabidopsis thaliana (Mouse-ear cress).